Reading from the N-terminus, the 169-residue chain is S-ribosylhomocysteine lyase (169 aa).

Residues His-54, His-58, and Cys-129 each contribute to the Fe cation site.

This sequence belongs to the LuxS family. Homodimer. Fe cation is required as a cofactor.

The catalysed reaction is S-(5-deoxy-D-ribos-5-yl)-L-homocysteine = (S)-4,5-dihydroxypentane-2,3-dione + L-homocysteine. Functionally, involved in the synthesis of autoinducer 2 (AI-2) which is secreted by bacteria and is used to communicate both the cell density and the metabolic potential of the environment. The regulation of gene expression in response to changes in cell density is called quorum sensing. Catalyzes the transformation of S-ribosylhomocysteine (RHC) to homocysteine (HC) and 4,5-dihydroxy-2,3-pentadione (DPD). In Haemophilus ducreyi (strain 35000HP / ATCC 700724), this protein is S-ribosylhomocysteine lyase.